The following is a 217-amino-acid chain: Adapter protein MecA (217 aa).

This sequence belongs to the MecA family. In terms of assembly, homodimer.

Its function is as follows. Enables the recognition and targeting of unfolded and aggregated proteins to the ClpC protease or to other proteins involved in proteolysis. The chain is Adapter protein MecA from Listeria innocua serovar 6a (strain ATCC BAA-680 / CLIP 11262).